The primary structure comprises 122 residues: Large ribosomal subunit protein uL14 (122 aa).

Belongs to the universal ribosomal protein uL14 family. In terms of assembly, part of the 50S ribosomal subunit. Forms a cluster with proteins L3 and L19. In the 70S ribosome, L14 and L19 interact and together make contacts with the 16S rRNA in bridges B5 and B8.

Its function is as follows. Binds to 23S rRNA. Forms part of two intersubunit bridges in the 70S ribosome. The polypeptide is Large ribosomal subunit protein uL14 (Fervidobacterium nodosum (strain ATCC 35602 / DSM 5306 / Rt17-B1)).